A 643-amino-acid chain; its full sequence is Type VI secretion system spike protein VgrG1a (643 aa).

Belongs to the VgrG protein family. In terms of assembly, forms homotrimers. Part of the type VI secretion system (T6SS). Interacts with EagT6 and Tse6; these interactions are required for Tse6 loading onto VgrG1. Interacts with Hcp1.

It is found in the secreted. Functionally, part of the H1 type VI secretion system (H1-T6SS) specialized secretion system, which delivers several virulence factors in both prokaryotic and eukaryotic cells during infection. Forms the spike at the tip of the elongating tube formed by haemolysin co-regulated protein 1/Hcp1. Allows the delivery of the Tse6 toxin to target cells where it exerts its toxicity. The polypeptide is Type VI secretion system spike protein VgrG1a (Pseudomonas aeruginosa (strain ATCC 15692 / DSM 22644 / CIP 104116 / JCM 14847 / LMG 12228 / 1C / PRS 101 / PAO1)).